Reading from the N-terminus, the 150-residue chain is Putative HTH-type transcriptional regulator rrf2-like (150 aa).

One can recognise an HTH rrf2-type domain in the interval methionine 1–alanine 139.

In Rhodobacter capsulatus (strain ATCC BAA-309 / NBRC 16581 / SB1003), this protein is Putative HTH-type transcriptional regulator rrf2-like.